Here is a 308-residue protein sequence, read N- to C-terminus: 11-beta-hydroxysteroid dehydrogenase-like 2 (308 aa).

The chain crosses the membrane as a helical; Signal-anchor for type II membrane protein span at residues 10-30 (FLLPPLTISFLVLFYPFYLFT). NADP(+) contacts are provided by residues 53-79 (GASS…VARR) and Asp-104. Ser-183 is a binding site for substrate. Residue Tyr-196 is the Proton acceptor of the active site. NADP(+) contacts are provided by residues 196–200 (YSASK) and Lys-200.

The protein belongs to the short-chain dehydrogenases/reductases (SDR) family.

The protein localises to the membrane. The polypeptide is 11-beta-hydroxysteroid dehydrogenase-like 2 (HSD2) (Arabidopsis thaliana (Mouse-ear cress)).